Here is a 500-residue protein sequence, read N- to C-terminus: Small ribosomal subunit protein uS3m (500 aa).

The protein belongs to the universal ribosomal protein uS3 family.

The protein resides in the mitochondrion. In Prototheca wickerhamii, this protein is Small ribosomal subunit protein uS3m (RPS3).